The chain runs to 248 residues: NAD(P)H-quinone oxidoreductase subunit K (248 aa).

The [4Fe-4S] cluster site is built by C66, C67, C131, and C162.

The protein belongs to the complex I 20 kDa subunit family. As to quaternary structure, NDH-1 can be composed of about 15 different subunits; different subcomplexes with different compositions have been identified which probably have different functions. Requires [4Fe-4S] cluster as cofactor.

The protein localises to the cellular thylakoid membrane. The catalysed reaction is a plastoquinone + NADH + (n+1) H(+)(in) = a plastoquinol + NAD(+) + n H(+)(out). The enzyme catalyses a plastoquinone + NADPH + (n+1) H(+)(in) = a plastoquinol + NADP(+) + n H(+)(out). NDH-1 shuttles electrons from an unknown electron donor, via FMN and iron-sulfur (Fe-S) centers, to quinones in the respiratory and/or the photosynthetic chain. The immediate electron acceptor for the enzyme in this species is believed to be plastoquinone. Couples the redox reaction to proton translocation, and thus conserves the redox energy in a proton gradient. Cyanobacterial NDH-1 also plays a role in inorganic carbon-concentration. In Synechococcus sp. (strain WH7803), this protein is NAD(P)H-quinone oxidoreductase subunit K.